The chain runs to 276 residues: Putative pyruvate, phosphate dikinase regulatory protein (276 aa).

Position 153–160 (Gly153–Thr160) interacts with ADP.

This sequence belongs to the pyruvate, phosphate/water dikinase regulatory protein family. PDRP subfamily.

It carries out the reaction N(tele)-phospho-L-histidyl/L-threonyl-[pyruvate, phosphate dikinase] + ADP = N(tele)-phospho-L-histidyl/O-phospho-L-threonyl-[pyruvate, phosphate dikinase] + AMP + H(+). The enzyme catalyses N(tele)-phospho-L-histidyl/O-phospho-L-threonyl-[pyruvate, phosphate dikinase] + phosphate + H(+) = N(tele)-phospho-L-histidyl/L-threonyl-[pyruvate, phosphate dikinase] + diphosphate. Its function is as follows. Bifunctional serine/threonine kinase and phosphorylase involved in the regulation of the pyruvate, phosphate dikinase (PPDK) by catalyzing its phosphorylation/dephosphorylation. The polypeptide is Putative pyruvate, phosphate dikinase regulatory protein (Brucella anthropi (strain ATCC 49188 / DSM 6882 / CCUG 24695 / JCM 21032 / LMG 3331 / NBRC 15819 / NCTC 12168 / Alc 37) (Ochrobactrum anthropi)).